Reading from the N-terminus, the 477-residue chain is Glutamate--tRNA ligase (477 aa).

A 'HIGH' region motif is present at residues proline 8–threonine 18. Residues lysine 247–arginine 251 carry the 'KMSKS' region motif. Lysine 250 contacts ATP.

It belongs to the class-I aminoacyl-tRNA synthetase family. Glutamate--tRNA ligase type 1 subfamily. Monomer.

It localises to the cytoplasm. The enzyme catalyses tRNA(Glu) + L-glutamate + ATP = L-glutamyl-tRNA(Glu) + AMP + diphosphate. Catalyzes the attachment of glutamate to tRNA(Glu) in a two-step reaction: glutamate is first activated by ATP to form Glu-AMP and then transferred to the acceptor end of tRNA(Glu). This is Glutamate--tRNA ligase from Synechococcus sp. (strain CC9902).